Consider the following 542-residue polypeptide: Chaperonin GroEL (542 aa).

Residues 29–32 (TLGP), 86–90 (DGTTT), glycine 413, and aspartate 494 contribute to the ATP site.

This sequence belongs to the chaperonin (HSP60) family. Forms a cylinder of 14 subunits composed of two heptameric rings stacked back-to-back. Interacts with the co-chaperonin GroES.

It is found in the cytoplasm. It catalyses the reaction ATP + H2O + a folded polypeptide = ADP + phosphate + an unfolded polypeptide.. Functionally, together with its co-chaperonin GroES, plays an essential role in assisting protein folding. The GroEL-GroES system forms a nano-cage that allows encapsulation of the non-native substrate proteins and provides a physical environment optimized to promote and accelerate protein folding. This is Chaperonin GroEL from Endomicrobium trichonymphae.